The following is a 781-amino-acid chain: 5-methyltetrahydropteroyltriglutamate--homocysteine methyltransferase (781 aa).

5-methyltetrahydropteroyltri-L-glutamate is bound by residues 20-23 (RELK) and lysine 131. L-homocysteine contacts are provided by residues 453 to 455 (IGS) and glutamate 506. L-methionine contacts are provided by residues 453–455 (IGS) and glutamate 506. 5-methyltetrahydropteroyltri-L-glutamate contacts are provided by residues 537–538 (RC) and tryptophan 583. Aspartate 621 contributes to the L-homocysteine binding site. Aspartate 621 serves as a coordination point for L-methionine. Glutamate 627 serves as a coordination point for 5-methyltetrahydropteroyltri-L-glutamate. The Zn(2+) site is built by histidine 663, cysteine 665, and glutamate 687. Histidine 716 functions as the Proton donor in the catalytic mechanism. A Zn(2+)-binding site is contributed by cysteine 748.

The protein belongs to the vitamin-B12 independent methionine synthase family. It depends on Zn(2+) as a cofactor.

The enzyme catalyses 5-methyltetrahydropteroyltri-L-glutamate + L-homocysteine = tetrahydropteroyltri-L-glutamate + L-methionine. The protein operates within amino-acid biosynthesis; L-methionine biosynthesis via de novo pathway; L-methionine from L-homocysteine (MetE route): step 1/1. Functionally, catalyzes the transfer of a methyl group from 5-methyltetrahydrofolate to homocysteine resulting in methionine formation. The protein is 5-methyltetrahydropteroyltriglutamate--homocysteine methyltransferase of Bradyrhizobium diazoefficiens (strain JCM 10833 / BCRC 13528 / IAM 13628 / NBRC 14792 / USDA 110).